Consider the following 979-residue polypeptide: Disks large-associated protein 3 (979 aa).

The segment covering 1–10 has biased composition (basic and acidic residues); it reads MRGYHGDRGS. Disordered regions lie at residues 1–20, 52–95, 136–169, 182–291, 400–429, and 537–581; these read MRGY…FADQ, AGLG…MYPG, FHTL…SPSR, AKSH…CLEG, AMGD…TRRS, and FRKA…RCSS. Ser-58 carries the phosphoserine modification. The segment covering 73-86 has biased composition (gly residues); sequence PEGGPAGAGVGGGS. A compositionally biased stretch (basic and acidic residues) spans 190-202; sequence PGKRDYNGPKAEG. The span at 203–218 shows a compositional bias: gly residues; it reads RGGSGGDSYPGPGSGG. Over residues 221–246 the composition is skewed to basic residues; sequence TSHHHHHHHHHHHHQSRHGKRSKSKD. Ser-406, Ser-409, Ser-412, and Ser-416 each carry phosphoserine. Positions 540-549 are enriched in pro residues; sequence APPPIPPGSQ. Ser-643 and Ser-645 each carry phosphoserine. Disordered regions lie at residues 741 to 790 and 908 to 940; these read EGYP…RASP and EEKK…DRQR. Composition is skewed to basic and acidic residues over residues 769–779 and 927–940; these read GRRDSWIERGS and PVKE…DRQR. Residues Ser-932, Ser-935, and Ser-967 each carry the phosphoserine modification.

Belongs to the SAPAP family. Interacts with DLG4/PSD-95.

It is found in the cell membrane. The protein localises to the postsynaptic density. The protein resides in the synapse. Functionally, may play a role in the molecular organization of synapses and neuronal cell signaling. Could be an adapter protein linking ion channel to the subsynaptic cytoskeleton. May induce enrichment of PSD-95/SAP90 at the plasma membrane. The chain is Disks large-associated protein 3 (DLGAP3) from Homo sapiens (Human).